Reading from the N-terminus, the 140-residue chain is Small ribosomal subunit protein uS19 (140 aa).

It belongs to the universal ribosomal protein uS19 family.

Its function is as follows. Protein S19 forms a complex with S13 that binds strongly to the 16S ribosomal RNA. The polypeptide is Small ribosomal subunit protein uS19 (Natronomonas pharaonis (strain ATCC 35678 / DSM 2160 / CIP 103997 / JCM 8858 / NBRC 14720 / NCIMB 2260 / Gabara) (Halobacterium pharaonis)).